The sequence spans 172 residues: MKWTIYQLHQMPKQSFEFDETVELNELTKLNSDIRRISPVRVKGRADIKSKQVSFDFTISGEMLLPCSRTLVDVPYPFEISTKELFIFHHTDDIEDDDVHIVEDDTIDITPIVKEEILLEIPMQIFCESEQEKGAAPQEGKDWQVISEEDKKNQVDPRLAALEKLLKQDDES.

Positions 130 to 154 (EQEKGAAPQEGKDWQVISEEDKKNQ) are disordered.

This is an uncharacterized protein from Bacillus subtilis (strain 168).